We begin with the raw amino-acid sequence, 316 residues long: Ribosomal RNA small subunit methyltransferase H (316 aa).

Residues 35-37 (AGH), Asp-55, Phe-84, Asp-105, and Gln-112 each bind S-adenosyl-L-methionine.

It belongs to the methyltransferase superfamily. RsmH family.

It is found in the cytoplasm. The enzyme catalyses cytidine(1402) in 16S rRNA + S-adenosyl-L-methionine = N(4)-methylcytidine(1402) in 16S rRNA + S-adenosyl-L-homocysteine + H(+). Its function is as follows. Specifically methylates the N4 position of cytidine in position 1402 (C1402) of 16S rRNA. This is Ribosomal RNA small subunit methyltransferase H from Streptococcus gordonii (strain Challis / ATCC 35105 / BCRC 15272 / CH1 / DL1 / V288).